A 433-amino-acid chain; its full sequence is Casein kinase 1-like protein 5 (433 aa).

Residues 9-278 (FRLGRKIGSG…LKRLFRNLFI (270 aa)) form the Protein kinase domain. ATP contacts are provided by residues 15 to 23 (IGSGSFGEI) and lysine 38. The Proton acceptor role is filled by aspartate 128. The segment at 297-433 (QSQSGNPQPR…DDVEPQSKAL (137 aa)) is disordered. A compositionally biased stretch (basic and acidic residues) spans 342–359 (LKQKDKNGNDSAIAKDKL). The segment covering 362 to 375 (GSLNLGRSEGSSSR) has biased composition (low complexity). The residue at position 390 (serine 390) is a Phosphoserine. A compositionally biased stretch (polar residues) spans 407 to 423 (INNNAGDETAATPQSNG).

Belongs to the protein kinase superfamily. CK1 Ser/Thr protein kinase family. Casein kinase I subfamily. As to quaternary structure, monomer. Autophosphorylated.

The protein resides in the cytoplasm. It carries out the reaction L-seryl-[protein] + ATP = O-phospho-L-seryl-[protein] + ADP + H(+). It catalyses the reaction L-threonyl-[protein] + ATP = O-phospho-L-threonyl-[protein] + ADP + H(+). Its function is as follows. Casein kinases are operationally defined by their preferential utilization of acidic proteins such as caseins as substrates. It can phosphorylate a large number of proteins. This Arabidopsis thaliana (Mouse-ear cress) protein is Casein kinase 1-like protein 5.